The sequence spans 919 residues: MSHHVPNLYGTPIRDPHEHKRNSASMGEVNQSVSSRNCERGSEKGTKQRKKASRACDQCRRKRIKCRFDKHTGVCQGCLEVGEKCQFIRVPLKRGPAKKRASVASNEKFSSDNDPLQYRPRTHSYPMNSGNNYLPSLARNSSFPSISSLFVPSITAQSQQFVKVPYDDIKRRSSLATLGSDSSISTEFGGNYRLDENLNVRQEGKDIVAKGMITPVEEMGACSSNVRRQGSQSLPIQEQRASPYINPFISGRSRLSSLSYTSEATTSEGNTQGKNQCMLTPNSVRSIEKERLNSLTAGCPNKKLGTDGRSDKWDKNSTWKPVYRSSNPSHPSTEKNVSLNQEASAKPLMLGTYRQFDATSFYKVLGIYYNFFHINFPVIPINKSKFTDMLDPEKPNVIDEIRQINNEIIQCFKTALEVLVFCKIKQRRSSKSTKSWSRDSLCDFQKGLYYIQNFNKCIADCFQSLITIKPVLKQNSSVIPSRIKFIYFSTIIVLNFILILAGEESSLLLGPSVGVFNEFQAHKLFLPFENTSPMLLLNSNEESGDEILDYAVLFKRLYILLNILDTLQSFRLGQPKLINLNFGSAIETYFSDKTGHNQVVEKAPVALDNILRNLKLGEFITYFVLNRKSLQVNVPHHLLFTNQTDYGEFAVEKGEHDNIAGKFETLLKKKEILIRKLLNIEQKNDHILENCCNSDAEMKNIGELVCSMITLVSGILDSITNMNAENSVDLDSKPLPNAYFAQDSEEELMSPTQSITSNLASEENTRCTTKDLMGTVSIFMLPMVEECYNIISLIGPIPTTLISLYIRNGNMAKGINDRIMTLSTALNELVQITALFNTLEPFRKNAHDRAKRYYVSATSSTGCYESVMKSMYSGKCAASNASNVAPSEEENKKILKKFADIGWKLMDDSELGCCCCFFN.

Positions 1–54 (MSHHVPNLYGTPIRDPHEHKRNSASMGEVNQSVSSRNCERGSEKGTKQRKKASR) are disordered. Over residues 23 to 36 (SASMGEVNQSVSSR) the composition is skewed to polar residues. The segment covering 37 to 46 (NCERGSEKGT) has biased composition (basic and acidic residues). Residues 56–85 (CDQCRRKRIKCRFDKHTGVCQGCLEVGEKC) constitute a DNA-binding region (zn(2)-C6 fungal-type). Residues 297-338 (AGCPNKKLGTDGRSDKWDKNSTWKPVYRSSNPSHPSTEKNVS) form a disordered region. Basic and acidic residues predominate over residues 304 to 317 (LGTDGRSDKWDKNS). Over residues 318–338 (TWKPVYRSSNPSHPSTEKNVS) the composition is skewed to polar residues.

As to quaternary structure, binds DNA in a sequence-specific manner.

The protein resides in the nucleus. The chain is Transcriptional regulatory protein EDS1 (EDS1) from Saccharomyces cerevisiae (strain Lalvin EC1118 / Prise de mousse) (Baker's yeast).